A 263-amino-acid polypeptide reads, in one-letter code: Small ribosomal subunit protein uS2 (263 aa).

Residues 230–249 (GEALVNEEKEITDEEKKEVL) show a composition bias toward basic and acidic residues. The tract at residues 230–263 (GEALVNEEKEITDEEKKEVLDEAMSEEDFGEEQE) is disordered. A compositionally biased stretch (acidic residues) spans 250–263 (DEAMSEEDFGEEQE).

The protein belongs to the universal ribosomal protein uS2 family.

The polypeptide is Small ribosomal subunit protein uS2 (Campylobacter jejuni subsp. jejuni serotype O:2 (strain ATCC 700819 / NCTC 11168)).